Consider the following 440-residue polypeptide: C-terminal-binding protein 1 (440 aa).

The interaction with GLIS2 1 stretch occupies residues 1–70; it reads MGSSHLLNKG…EIHEKVLNEA (70 aa). Residues Ser100, 180–185, Asp204, 237–243, 264–266, and Asp290 each bind NAD(+); these read IGLGRV, CGLNEHN, and TAR. The active site involves Arg266. An interaction with GLIS2 2 region spans residues 288-360; sequence ALDVHESEPF…VNKDHLTAAT (73 aa). Glu295 is a catalytic residue. The residue at position 300 (Ser300) is a Phosphoserine. His315 acts as the Proton donor in catalysis. Residue 315–318 participates in NAD(+) binding; sequence HAAW. The segment at 408-440 is disordered; that stretch reads SHGLPPVAHPPHAPSPGQTVKPEADRDHASDQL. Residue Ser422 is modified to Phosphoserine; by HIPK2. Lys428 participates in a covalent cross-link: Glycyl lysine isopeptide (Lys-Gly) (interchain with G-Cter in SUMO). A compositionally biased stretch (basic and acidic residues) spans 429 to 440; sequence PEADRDHASDQL.

Belongs to the D-isomer specific 2-hydroxyacid dehydrogenase family. In terms of assembly, homo- or heterodimer. Heterodimer with CTBP2. Interacts with PRDM16; the interaction represses white adipose tissue (WAT)-specific genes expression. Interacts with GLIS2, FOXP2, HDAC4, HDAC5, HDAC9 and ZNF217. Interacts with ELK3 (via its PXDLS motif). Interacts with RBBP8 (via its PXDLS motif); the interaction is disrupted by binding to adenovirus E1A. Interacts with FOXP1, HIPK2, PNN, NRIP1, MECOM, ZFHX1B and WIZ. Interacts with ZNF366 (via PXDLS motif). Interaction with SATB1 (non-acetylated form); the interaction stabilizes its attachment to DNA and promotes transcription repression. Interacts with BCL6; the interaction is required for BCL6 transcriptional autoinhibition and inhibition of some BCL6 target genes. Interacts with IKZF4. Interacts with MCRIP1 (unphosphorylated form, via the PXDLS motif); competitively inhibiting CTBP-ZEB1 interaction. Interacts with Bassoon/BSN; this interaction targets and anchors CTBP1 to presynapses. Interacts with SIMC1. (Microbial infection) Interacts with Epstein-Barr virus EBNA3. Interacts with Epstein-Barr virus EBNA6; this interaction leads to gene repression, but also seems to interfere with the repressive function of CtBP pre-bound to DNA, leading to EBNA6 mediated up-regulation of many cellular genes. As to quaternary structure, (Microbial infection) Interacts with adenovirus E1A protein (via its C-terminus); the interaction disrupts the interaction of CTBP1 with RBBP8. In terms of assembly, (Microbial infection) Interacts with human adenovirus 5 E1A protein; this interaction seems to potentiate viral replication. NAD(+) is required as a cofactor. Post-translationally, the level of phosphorylation appears to be regulated during the cell cycle. Phosphorylation by HIPK2 on Ser-422 induces proteasomal degradation. ADP-ribosylated; when cells are exposed to brefeldin A. In terms of processing, sumoylation on Lys-428 is promoted by the E3 SUMO-protein ligase CBX4. In terms of tissue distribution, expressed in germinal center B-cells.

The protein resides in the cytoplasm. It localises to the nucleus. In terms of biological role, corepressor targeting diverse transcription regulators such as GLIS2 or BCL6. Has dehydrogenase activity. Involved in controlling the equilibrium between tubular and stacked structures in the Golgi complex. Functions in brown adipose tissue (BAT) differentiation. This Homo sapiens (Human) protein is C-terminal-binding protein 1 (CTBP1).